The sequence spans 538 residues: Tetracenomycin C resistance and export protein (538 aa).

Helical transmembrane passes span 28–48 (LLAV…VAIA), 65–85 (WITN…GKLG), 100–120 (GFAV…IVVF), 126–146 (LFGA…FPPG), 154–174 (IWSG…GLLV), 181–201 (AVFF…LVIL), 213–233 (FDVS…WGLI), 239–259 (GWGD…FAGF), 286–306 (VLMV…TFYL), 319–339 (VHLL…GIVI), 342–362 (FGPG…LWGM), 371–391 (MGIT…VMVG), 413–433 (QSAM…LMAS), and 494–514 (MGLA…VALF).

It belongs to the major facilitator superfamily. EmrB family.

The protein localises to the cell membrane. It functions in the pathway antibiotic biosynthesis; tetracenomycin C biosynthesis. Resistance to tetracenomycin C by an active tetracenomycin C efflux system which is probably energized by transmembrane electrochemical gradients. In Streptomyces glaucescens, this protein is Tetracenomycin C resistance and export protein (tcmA).